The following is a 550-amino-acid chain: Hydroxylamine reductase (550 aa).

Cys-3, Cys-6, Cys-18, and Cys-25 together coordinate [2Fe-2S] cluster. Hybrid [4Fe-2O-2S] cluster contacts are provided by His-249, Glu-273, Cys-317, Cys-405, Cys-433, Cys-458, Glu-492, and Lys-494. At Cys-405 the chain carries Cysteine persulfide.

It belongs to the HCP family. The cofactor is [2Fe-2S] cluster. Hybrid [4Fe-2O-2S] cluster is required as a cofactor.

The protein resides in the cytoplasm. It catalyses the reaction A + NH4(+) + H2O = hydroxylamine + AH2 + H(+). Functionally, catalyzes the reduction of hydroxylamine to form NH(3) and H(2)O. This Salmonella gallinarum (strain 287/91 / NCTC 13346) protein is Hydroxylamine reductase.